A 151-amino-acid polypeptide reads, in one-letter code: Urease accessory protein UreE (151 aa).

Belongs to the UreE family.

Its subcellular location is the cytoplasm. Its function is as follows. Involved in urease metallocenter assembly. Binds nickel. Probably functions as a nickel donor during metallocenter assembly. In Lachnoclostridium phytofermentans (strain ATCC 700394 / DSM 18823 / ISDg) (Clostridium phytofermentans), this protein is Urease accessory protein UreE.